We begin with the raw amino-acid sequence, 209 residues long: dITP/XTP pyrophosphatase (209 aa).

7 to 12 (SSHGYK) contacts substrate. Residue Asp-70 is the Proton acceptor of the active site. Asp-70 provides a ligand contact to Mg(2+). Substrate is bound by residues Ser-71, 154-157 (FGYD), Lys-177, and 182-183 (HR).

Belongs to the HAM1 NTPase family. In terms of assembly, homodimer. The cofactor is Mg(2+).

It carries out the reaction XTP + H2O = XMP + diphosphate + H(+). The catalysed reaction is dITP + H2O = dIMP + diphosphate + H(+). The enzyme catalyses ITP + H2O = IMP + diphosphate + H(+). In terms of biological role, pyrophosphatase that catalyzes the hydrolysis of nucleoside triphosphates to their monophosphate derivatives, with a high preference for the non-canonical purine nucleotides XTP (xanthosine triphosphate), dITP (deoxyinosine triphosphate) and ITP. Seems to function as a house-cleaning enzyme that removes non-canonical purine nucleotides from the nucleotide pool, thus preventing their incorporation into DNA/RNA and avoiding chromosomal lesions. This chain is dITP/XTP pyrophosphatase, found in Chlamydia trachomatis serovar A (strain ATCC VR-571B / DSM 19440 / HAR-13).